The sequence spans 234 residues: MEKEKFQQKALKQTKQKKSKSAEFLMVKEERAATEGIENPAFNISSTDLSAYQTSEEEVIRHDKLHSTLAAHQQKLRLQAHAEPRGNEYSRNYFDLLMDEEINPRQCGMEVSEEDPVKFQEQILYGKLMKLLDEASKIIDSQVPVTGEDFSDSVMPVSFSKTRDLHRELGDEAIPSYIEQFEREVQNDIIMFGSFSLEQDSKHHKEASHHNKKNCNPGFMSSFKDREASRWQQR.

Disordered stretches follow at residues 1-21 (MEKEKFQQKALKQTKQKKSKS) and 201-234 (SKHHKEASHHNKKNCNPGFMSSFKDREASRWQQR). The segment covering 202–213 (KHHKEASHHNKK) has biased composition (basic residues). Positions 223-234 (FKDREASRWQQR) are enriched in basic and acidic residues.

The protein is Orofacial cleft 1 candidate gene 1 protein homolog (OFCC1) of Gallus gallus (Chicken).